The primary structure comprises 162 residues: Ribosome maturation factor RimP (162 aa).

Belongs to the RimP family.

It is found in the cytoplasm. Functionally, required for maturation of 30S ribosomal subunits. The chain is Ribosome maturation factor RimP from Cupriavidus pinatubonensis (strain JMP 134 / LMG 1197) (Cupriavidus necator (strain JMP 134)).